The chain runs to 101 residues: Small ribosomal subunit protein bS18c (101 aa).

This sequence belongs to the bacterial ribosomal protein bS18 family. In terms of assembly, part of the 30S ribosomal subunit.

It is found in the plastid. The protein resides in the chloroplast. This Carica papaya (Papaya) protein is Small ribosomal subunit protein bS18c.